The chain runs to 73 residues: Large ribosomal subunit protein bL31 (73 aa).

This sequence belongs to the bacterial ribosomal protein bL31 family. Type A subfamily. Part of the 50S ribosomal subunit.

Its function is as follows. Binds the 23S rRNA. The sequence is that of Large ribosomal subunit protein bL31 from Chelativorans sp. (strain BNC1).